A 220-amino-acid chain; its full sequence is Splicing factor U2AF 26 kDa subunit (220 aa).

Ala-2 bears the N-acetylalanine mark. A C3H1-type 1 zinc finger spans residues 12–40 (EKDKVNCSFYFKIGACRHGDRCSRLHNKP). The region spanning 65–147 (SHCHVSDVEV…QAVHAELSPV (83 aa)) is the RRM domain. A C3H1-type 2 zinc finger spans residues 149 to 176 (DFRESCCRQYEMGECTRGGFCNFMHLRP). The segment at 186–220 (YGRGPRRRSPPRSHTGHRPRERNRRRSPDHRHGRF) is disordered. Basic residues predominate over residues 189 to 220 (GPRRRSPPRSHTGHRPRERNRRRSPDHRHGRF).

It belongs to the splicing factor SR family. Interacts with GFI1, U2AF2 and C1QBP.

The protein resides in the nucleus. The protein localises to the nucleus speckle. It is found in the cytoplasm. Its function is as follows. RNA-binding protein that function as a pre-mRNA splicing factor. Plays a critical role in both constitutive and enhancer-dependent splicing by mediating protein-protein interactions and protein-RNA interactions required for accurate 3'-splice site selection. Acts by enhancing the binding of U2AF2 to weak pyrimidine tracts. Also participates in the regulation of alternative pre-mRNA splicing. Activates exon 5 skipping of PTPRC during T-cell activation; an event reversed by GFI1. Binds to RNA at the AG dinucleotide at the 3'-splice site. Shows a preference for AGC or AGA. The polypeptide is Splicing factor U2AF 26 kDa subunit (U2AF1L4) (Bos taurus (Bovine)).